We begin with the raw amino-acid sequence, 140 residues long: Nucleoside diphosphate kinase (140 aa).

The ATP site is built by Lys11, Phe59, Arg87, Thr93, Arg104, and Asn114. Catalysis depends on His117, which acts as the Pros-phosphohistidine intermediate.

This sequence belongs to the NDK family. In terms of assembly, homotetramer. Mg(2+) is required as a cofactor.

Its subcellular location is the cytoplasm. The enzyme catalyses a 2'-deoxyribonucleoside 5'-diphosphate + ATP = a 2'-deoxyribonucleoside 5'-triphosphate + ADP. The catalysed reaction is a ribonucleoside 5'-diphosphate + ATP = a ribonucleoside 5'-triphosphate + ADP. Major role in the synthesis of nucleoside triphosphates other than ATP. The ATP gamma phosphate is transferred to the NDP beta phosphate via a ping-pong mechanism, using a phosphorylated active-site intermediate. The chain is Nucleoside diphosphate kinase from Rhodopseudomonas palustris (strain ATCC BAA-98 / CGA009).